The primary structure comprises 116 residues: Iron-sulfur cluster insertion protein ErpA (116 aa).

3 residues coordinate iron-sulfur cluster: Cys44, Cys108, and Cys110.

It belongs to the HesB/IscA family. As to quaternary structure, homodimer. Iron-sulfur cluster serves as cofactor.

Functionally, required for insertion of 4Fe-4S clusters for at least IspG. This is Iron-sulfur cluster insertion protein ErpA from Shewanella oneidensis (strain ATCC 700550 / JCM 31522 / CIP 106686 / LMG 19005 / NCIMB 14063 / MR-1).